Here is a 444-residue protein sequence, read N- to C-terminus: 23S rRNA (uracil(1939)-C(5))-methyltransferase RlmD (444 aa).

Residues 5–67 (RNRLDRTPFQ…RHFDEAKTVG (63 aa)) enclose the TRAM domain. [4Fe-4S] cluster-binding residues include Cys-80, Cys-86, Cys-89, and Cys-168. S-adenosyl-L-methionine is bound by residues Gln-276, Phe-305, Asn-310, Glu-326, Asp-353, and Asp-374. Cys-400 acts as the Nucleophile in catalysis.

The protein belongs to the class I-like SAM-binding methyltransferase superfamily. RNA M5U methyltransferase family. RlmD subfamily.

It catalyses the reaction uridine(1939) in 23S rRNA + S-adenosyl-L-methionine = 5-methyluridine(1939) in 23S rRNA + S-adenosyl-L-homocysteine + H(+). Catalyzes the formation of 5-methyl-uridine at position 1939 (m5U1939) in 23S rRNA. The chain is 23S rRNA (uracil(1939)-C(5))-methyltransferase RlmD from Xanthomonas axonopodis pv. citri (strain 306).